The sequence spans 166 residues: MRLILLSGLLLLGIFLANGDEVDPDRKLLNSLIDALMHLQREFANLKGSFLIVHKARSFGSGSERMYVTNKEIKNFEALRQICEQADGHIPSPQLENQNKAFANVLERHGKEAYLVVGDSANFTNWAAGEPNKAAGACVKADTHGSWHSASCDDNLLVVCEFYFIL.

Positions M1–G19 are cleaved as a signal peptide. The C-type lectin domain occupies L46–E161. Disulfide bonds link C83/C160 and C138/C152. N122 is a glycosylation site (N-linked (GlcNAc...) asparagine).

This sequence belongs to the alpha-type phospholipase A2 inhibitor family. As to quaternary structure, homotrimer; non-covalently linked. Expressed by the liver.

It is found in the secreted. In terms of biological role, this phospholipase A2 inhibitor binds directly phospholipase A2 in the presence or absence of calcium. The sequence is that of Phospholipase A2 inhibitor clone 11 from Bothrops neuwiedi (Neuwied's lancehead).